The primary structure comprises 112 residues: Cell cycle protein GpsB (112 aa).

Positions 32-75 (LDDIIKDYETYISTIEELRQENTRLKEEVKQAKKRQEAAQTTVS) form a coiled coil.

It belongs to the GpsB family. In terms of assembly, forms polymers through the coiled coil domains. Interacts with PBP1, MreC and EzrA.

Its subcellular location is the cytoplasm. Its function is as follows. Divisome component that associates with the complex late in its assembly, after the Z-ring is formed, and is dependent on DivIC and PBP2B for its recruitment to the divisome. Together with EzrA, is a key component of the system that regulates PBP1 localization during cell cycle progression. Its main role could be the removal of PBP1 from the cell pole after pole maturation is completed. Also contributes to the recruitment of PBP1 to the division complex. Not essential for septum formation. This is Cell cycle protein GpsB from Streptococcus mutans serotype c (strain ATCC 700610 / UA159).